The chain runs to 294 residues: MINGIINLKKEAGMTSHDAVFKLRKLLQEKKIGHGGTLDPDVVGVLPIAVGKATRVIEYMTEAGKVYEGQVTLGYSTTTEDASGEVVARSSLPAVLTEELVDQTMTTFLGKITQTPPMYSAVKVNGRKLYEYARTGESVERPRREVTISLFERTSPLNFTEDGLCRFSFKVACSKGTYVRTLAVDLGRALWVESHMSFLQRSASAGLTLETAYTLGEIADMVSKQEMSFLLPIEYGVADLPKMVIDDTELTEISFGRRLSLPSQEPLLAAFHGEKVIAILEKRDQEYKPKKVLI.

Asp39 serves as the catalytic Nucleophile.

This sequence belongs to the pseudouridine synthase TruB family. Type 1 subfamily.

The catalysed reaction is uridine(55) in tRNA = pseudouridine(55) in tRNA. In terms of biological role, responsible for synthesis of pseudouridine from uracil-55 in the psi GC loop of transfer RNAs. The chain is tRNA pseudouridine synthase B from Streptococcus pyogenes serotype M28 (strain MGAS6180).